The sequence spans 289 residues: 26S proteasome non-ATPase regulatory subunit 8 (289 aa).

S45 carries the phosphoserine modification. The PCI domain maps to 101-270 (PSFERYMAQL…QQKPEDTTIP (170 aa)). A Glycyl lysine isopeptide (Lys-Gly) (interchain with G-Cter in SUMO2) cross-link involves residue K236.

It belongs to the proteasome subunit S14 family. As to quaternary structure, component of the 19S proteasome regulatory particle complex. The 26S proteasome consists of a 20S core particle (CP) and two 19S regulatory subunits (RP). The regulatory particle is made of a lid composed of 9 subunits including PSMD8, a base containing 6 ATPases and few additional components. Interacts with DDI2. Interacts with TASOR.

In terms of biological role, component of the 26S proteasome, a multiprotein complex involved in the ATP-dependent degradation of ubiquitinated proteins. This complex plays a key role in the maintenance of protein homeostasis by removing misfolded or damaged proteins, which could impair cellular functions, and by removing proteins whose functions are no longer required. Therefore, the proteasome participates in numerous cellular processes, including cell cycle progression, apoptosis, or DNA damage repair. The chain is 26S proteasome non-ATPase regulatory subunit 8 (PSMD8) from Pongo abelii (Sumatran orangutan).